Consider the following 947-residue polypeptide: Protocadherin alpha-4 (947 aa).

The N-terminal stretch at 1–29 (MEFSWGSGQESRRLLLLLLLLAAWEAGNG) is a signal peptide. 6 consecutive Cadherin domains span residues 30–133 (QLHY…PPVF), 134–242 (PATQ…APAF), 243–350 (DRTI…VPDL), 351–455 (EFKS…APAF), 456–565 (AQPE…APAL), and 588–678 (GHVV…APKA). At 30–697 (QLHYSVSEEA…GPDAALVDVN (668 aa)) the chain is on the extracellular side. A disulfide bridge links Cys96 with Cys102. N-linked (GlcNAc...) asparagine glycans are attached at residues Asn139, Asn257, and Asn265. N-linked (GlcNAc...) asparagine glycosylation occurs at Asn548. The helical transmembrane segment at 698–718 (VYLIIAICAVSSLLVLTLLLY) threads the bilayer. The Cytoplasmic segment spans residues 719 to 947 (TALRCSALPT…GNSTTDNSDQ (229 aa)). PXXP repeat units follow at residues 734–737 (PGKP), 774–777 (PSLP), 796–799 (PRQP), 829–832 (PGGP), 870–873 (PGNP), and 888–891 (PGSP). A 6 X 4 AA repeats of P-X-X-P region spans residues 734 to 891 (PGKPTLVCSS…PDKFIIPGSP (158 aa)). The tract at residues 738–947 (TLVCSSAVGS…GNSTTDNSDQ (210 aa)) is required for interaction with FYN. 3 disordered regions span residues 754-805 (RRPR…DWRY), 828-853 (GPGG…EVSP), and 868-947 (YGPG…NSDQ). The span at 906 to 920 (DKSDFITFGKKEETK) shows a compositional bias: basic and acidic residues.

In terms of assembly, forms homodimers in trans (molecules expressed by two different cells). Forms promiscuous heterodimers in cis (at the plasma membrane of the same cell) with other protocadherins. Interacts with FYN.

It localises to the cell membrane. Functionally, calcium-dependent cell-adhesion protein involved in cells self-recognition and non-self discrimination. Thereby, it is involved in the establishment and maintenance of specific neuronal connections in the brain. The chain is Protocadherin alpha-4 from Homo sapiens (Human).